The primary structure comprises 231 residues: MVSFKSLLVAVSALTGALARPFDFLDERDDGNATSVLEARQVTGNSEGYHNGYFYSWWSDGGGYAQYRMGEGSHYQVDWRNTGNFVGGKGWNPGTGRTINYGGSFNPQGNGYLCVYGWTRGPLVEYYVIESYGSYNPGSQAQHRGTVYTDGDTYDLYMSTRYQQPSIDGVQTFNQYWSIRRNKRTSGSVNMQNHFNAWRSAGMNLGNHYYQILATEGYQSSGSSSIYVQTS.

Residues 1-19 form the signal peptide; the sequence is MVSFKSLLVAVSALTGALA. N32 carries an N-linked (GlcNAc...) asparagine glycan. The region spanning 41–229 is the GH11 domain; the sequence is QVTGNSEGYH…SSGSSSIYVQ (189 aa). The active-site Nucleophile is E125. E216 acts as the Proton donor in catalysis.

The protein belongs to the glycosyl hydrolase 11 (cellulase G) family.

It is found in the secreted. It carries out the reaction Endohydrolysis of (1-&gt;4)-beta-D-xylosidic linkages in xylans.. It functions in the pathway glycan degradation; xylan degradation. Its activity is regulated as follows. Inhibited by the proteinaceous endoxylanase inhibitor I from T.aestivum (TAXI-I). Its function is as follows. Endo-1,4-beta-xylanase involved in the hydrolysis of xylan, a major structural heterogeneous polysaccharide found in plant biomass representing the second most abundant polysaccharide in the biosphere, after cellulose. Plays an important role in causing fusarium head blight (FHB) on cereal crops. This Gibberella zeae (strain ATCC MYA-4620 / CBS 123657 / FGSC 9075 / NRRL 31084 / PH-1) (Wheat head blight fungus) protein is Endo-1,4-beta-xylanase A (XYLA).